The primary structure comprises 106 residues: Urease subunit beta (106 aa).

This sequence belongs to the urease beta subunit family. As to quaternary structure, heterotrimer of UreA (gamma), UreB (beta) and UreC (alpha) subunits. Three heterotrimers associate to form the active enzyme.

It is found in the cytoplasm. It catalyses the reaction urea + 2 H2O + H(+) = hydrogencarbonate + 2 NH4(+). It functions in the pathway nitrogen metabolism; urea degradation; CO(2) and NH(3) from urea (urease route): step 1/1. This is Urease subunit beta from Alkalilimnicola ehrlichii (strain ATCC BAA-1101 / DSM 17681 / MLHE-1).